We begin with the raw amino-acid sequence, 637 residues long: Palmitoyltransferase Hip14 (637 aa).

The Cytoplasmic portion of the chain corresponds to 1–295; sequence MYQSACQAAT…SKLRHDKRLR (295 aa). ANK repeat units lie at residues 77–106, 111–140, 144–173, 177–207, and 212–242; these read ETVTLLHWAAINNRRDIIRYFLEKGATVDA, LNATPLHWATRQGHLGAVVLLMAAGADPRI, EGCSCIHIAAQFAHTALVAYFIAKGVDPDL, GGMTALMWAAWKVCALDPVRLLLTLGANPAM, and HGNTALHWAILARNATAISTLVLKSKASLDV. The helical transmembrane segment at 296 to 315 threads the bilayer; it reads WWSMVACPFTAFYLAGIVFT. Topologically, residues 316-318 are lumenal; that stretch reads VNT. A helical transmembrane segment spans residues 319–341; it reads LYIIKFFLLGCLYSIFHTIGKAL. Residues 342-345 lie on the Cytoplasmic side of the membrane; it reads FDEH. A helical transmembrane segment spans residues 346-366; it reads LMALLPLSVYLATKAWFYVTW. The Lumenal segment spans residues 367-373; the sequence is LMYIDDA. A helical transmembrane segment spans residues 374-394; sequence VSFTATVCFLISSLLLWVCFL. Residues 395–472 lie on the Cytoplasmic side of the membrane; the sequence is KSWKGDPGII…VGNCIGLKNH (78 aa). Residues 430 to 480 enclose the DHHC domain; the sequence is SFCSGCLVRRPIRSKHCSVCDRCVARFDHHCPWVGNCIGLKNHSYFMGFLW. Residue Cys460 is the S-palmitoyl cysteine intermediate of the active site. A helical transmembrane segment spans residues 473 to 493; the sequence is SYFMGFLWMLLIMCAWMLYGG. The Lumenal segment spans residues 494-520; that stretch reads SKYYVNQCNVRFDDFLGAMRAIGNCDA. Residues 521–541 traverse the membrane as a helical segment; the sequence is WVGWVMGNALLHMSWVILLTI. The Cytoplasmic portion of the chain corresponds to 542-637; it reads CQTYQVICLG…DGMAGDHQYV (96 aa).

It belongs to the DHHC palmitoyltransferase family. AKR/ZDHHC17 subfamily. As to quaternary structure, interacts with dorsal-ventral patterning protein Sog. In stage 13-15 embryos, expressed in the central nervous system. At the third instar larval stage, expressed in the ventral nerve cord and is enriched in the neuropil.

It localises to the golgi apparatus membrane. The protein resides in the presynaptic cell membrane. It catalyses the reaction L-cysteinyl-[protein] + hexadecanoyl-CoA = S-hexadecanoyl-L-cysteinyl-[protein] + CoA. Probable palmitoyltransferase which is required for photoreceptor synaptic transmission and for the correct expression and localization of palmitoylated protein Csp and synaptosomal-associated protein Snap25. Probably palmitoylates Csp. Probably also palmitoylates the dorsal-ventral patterning protein Sog and promotes its secretion and activity and the stabilization of the membrane-bound form. Required for synaptic vesicle exocytosis. This Drosophila melanogaster (Fruit fly) protein is Palmitoyltransferase Hip14.